The sequence spans 514 residues: CUGBP Elav-like family member 2 (514 aa).

3 consecutive RRM domains span residues Ile-44–Ser-127, Arg-136–Thr-216, and Ala-429–Ser-507.

The protein belongs to the CELF/BRUNOL family.

The protein localises to the nucleus. Its subcellular location is the cytoplasm. In terms of biological role, RNA-binding protein implicated in the regulation of several post-transcriptional events. May be involved in pre-mRNA alternative splicing, mRNA translation repression and stability. The protein is CUGBP Elav-like family member 2 (celf2) of Danio rerio (Zebrafish).